A 137-amino-acid polypeptide reads, in one-letter code: Large ribosomal subunit protein uL16 (137 aa).

This sequence belongs to the universal ribosomal protein uL16 family. Part of the 50S ribosomal subunit.

In terms of biological role, binds 23S rRNA and is also seen to make contacts with the A and possibly P site tRNAs. The polypeptide is Large ribosomal subunit protein uL16 (Xanthobacter autotrophicus (strain ATCC BAA-1158 / Py2)).